Reading from the N-terminus, the 566-residue chain is Peroxisomal targeting signal receptor (566 aa).

Cys5 is covalently cross-linked (Glycyl cysteine thioester (Cys-Gly) (interchain with G-Cter in ubiquitin)). The tract at residues 6-28 (SVGSNPLAQLNKHAQQNPALRQV) is amphipathic helix 1 (AH1). A Glycyl lysine isopeptide (Lys-Gly) (interchain with G-Cter in ubiquitin) cross-link involves residue Lys17. Positions 53–71 (RFQMDQFMNRSPGFSDGQL) are amphipathic helix 2 (AH2). Residues 88 to 159 (GLKKQDSGSS…IGRPMMHTGI (72 aa)) form a disordered region. Residues 94 to 142 (SGSSNMSAGDTAQHSRSWGNEFNSRSPQQGLASRVNNVERISNTNSMSS) are compositionally biased toward polar residues. A WxxxF/Y motif 1 motif is present at residues 111 to 115 (WGNEF). An amphipathic helix 3 (AH3) region spans residues 145–151 (PGMSRIG). The short motif at 187-191 (WNEQF) is the WxxxF/Y motif 2 element. The amphipathic helix 4 (AH4) stretch occupies residues 225 to 241 (FQEVWDKLQAETADNNL). The short motif at 248–252 (WEKDY) is the WxxxF/Y motif 3 element. TPR repeat units follow at residues 277-311 (NPNA…DPAH), 312-345 (VDAW…DPTN), 416-449 (PEVQ…NPND), 451-483 (LMWN…KPSF), and 485-517 (RARY…HEVE).

The protein belongs to the peroxisomal targeting signal receptor family. As to quaternary structure, interacts (via WxxxF/Y and LVxEF motifs) with PEX14; promoting translocation through the PEX13-PEX14 docking complex. Post-translationally, monoubiquitinated at Cys-5 by PEX2 during PEX5 passage through the retrotranslocation channel: monoubiquitination acts as a signal for PEX5 extraction and is required for proper export from peroxisomes and recycling. When PEX5 recycling is compromised, polyubiquitinated at Lys-17 by PEX10 during its passage through the retrotranslocation channel, leading to its degradation.

The protein resides in the cytoplasm. It is found in the cytosol. It localises to the peroxisome matrix. Its function is as follows. Receptor that mediates peroxisomal import of proteins containing a C-terminal PTS1-type tripeptide peroxisomal targeting signal (SKL-type). Binds to cargo proteins containing a PTS1 peroxisomal targeting signal in the cytosol, and translocates them into the peroxisome matrix by passing through the PEX13-PEX14 docking complex along with cargo proteins. PEX5 receptor is then retrotranslocated into the cytosol, leading to release of bound cargo in the peroxisome matrix, and reset for a subsequent peroxisome import cycle. This Kluyveromyces lactis (strain ATCC 8585 / CBS 2359 / DSM 70799 / NBRC 1267 / NRRL Y-1140 / WM37) (Yeast) protein is Peroxisomal targeting signal receptor (PEX5).